Reading from the N-terminus, the 817-residue chain is Leucine--tRNA ligase (817 aa).

Residues 42–52 (PYPSGRLHMGH) carry the 'HIGH' region motif. Residues 576 to 580 (KMSKS) carry the 'KMSKS' region motif. K579 contributes to the ATP binding site.

Belongs to the class-I aminoacyl-tRNA synthetase family.

Its subcellular location is the cytoplasm. The catalysed reaction is tRNA(Leu) + L-leucine + ATP = L-leucyl-tRNA(Leu) + AMP + diphosphate. The polypeptide is Leucine--tRNA ligase (Thioalkalivibrio sulfidiphilus (strain HL-EbGR7)).